The following is a 508-amino-acid chain: Acyl-CoA-binding domain-containing protein 5 (508 aa).

The region spanning 44–133 is the ACB domain; the sequence is YETRFEAAVK…MKKIIETMPM (90 aa). An acyl-CoA contacts are provided by residues 55–64, 75–79, lysine 101, and tyrosine 120; these read IQSLPKNGSF and YSFYK. Residues 175-215 form a disordered region; the sequence is AKAVNGKAESSDSGAESEEEEAQEELKGAEQSGSDDKKTLK. A coiled-coil region spans residues 181–214; the sequence is KAESSDSGAESEEEEAQEELKGAEQSGSDDKKTL. Phosphoserine occurs at positions 184, 185, 187, 191, 206, and 233. Positions 198–215 are enriched in basic and acidic residues; the sequence is EELKGAEQSGSDDKKTLK. Basic and acidic residues predominate over residues 240–260; sequence SDIHTDSSRSTRSSEDEKPGD. The disordered stretch occupies residues 240 to 300; it reads SDIHTDSSRS…LTSDSDSEVY (61 aa). Serine 303 carries the post-translational modification Phosphoserine. 2 disordered regions span residues 318 to 340 and 353 to 419; these read PTQHLESSGFCEDAQQSPGNGSI and EVKH…RGSR. Positions 353–376 are enriched in basic and acidic residues; sequence EVKHGGEDGRSSSGAPHRETRGGE. Position 405 is a phosphoserine (serine 405). Residues 408–418 show a composition bias toward basic and acidic residues; sequence DGERWGSDRGS. The stretch at 428–453 forms a coiled coil; the sequence is LVLIRLQEDMQNVLQRLHKLETLTAS. Residue lysine 446 is modified to N6-acetyllysine. Residues 480 to 500 form a helical membrane-spanning segment; the sequence is GALAFAIIWPFIAQWLAHLYY.

This sequence belongs to the ATG37 family.

Its subcellular location is the peroxisome membrane. In terms of biological role, acyl-CoA binding protein which acts as the peroxisome receptor for pexophagy but is dispensable for aggrephagy and nonselective autophagy. Binds medium- and long-chain acyl-CoA esters. In Mus musculus (Mouse), this protein is Acyl-CoA-binding domain-containing protein 5 (Acbd5).